Reading from the N-terminus, the 379-residue chain is MKLFEDKSVEFHKRLSKKERSDGGVFFTPKDIRDIVFEELGDFEPTNILEPTCGTGEFISDCRKVYKNSRIIGVEIDPRSAELARDGSKNEIIVHDFMTWDTDEKFDLIIGNPPYFTRPTGFKHDPSVVKCRSNICIEVLHKCITRHLADNGMLAMVLPVSILNSKFYTPTIDLITDTMDVVSARAIKKNNFMGTNVRVMVFIIRKRTPGFVSKYTFKTSLGKVIINPDGERLGSIVSGKKTIGSLNVNISFGVTLASVKEYFVDKSCSGSFPLICYNNIAKKGDLLFVSDKYSKKRFNGRAILIPRGYAHGDYSFNFIDYTNDYFIIENHVIAITGEDCVLDIIAKSFADHRTREFCRLLCSSGDISKDYVKEIPVFG.

Belongs to the N(4)/N(6)-methyltransferase family.

It carries out the reaction a 2'-deoxyadenosine in DNA + S-adenosyl-L-methionine = an N(6)-methyl-2'-deoxyadenosine in DNA + S-adenosyl-L-homocysteine + H(+). A gamma subtype methylase, recognizes the double-stranded sequence 5'-TGCA-3', methylates A-4 on both strands, and protects the DNA from cleavage by the CviRI endonuclease. This chain is Type II methyltransferase M.CvrRI (CVIRIM), found in Chlorella (PBCV-XZ-6E).